We begin with the raw amino-acid sequence, 152 residues long: Deoxyuridine 5'-triphosphate nucleotidohydrolase (152 aa).

Residues 72 to 74 (RSG), asparagine 85, and 89 to 91 (TID) each bind substrate.

This sequence belongs to the dUTPase family. Mg(2+) is required as a cofactor.

The enzyme catalyses dUTP + H2O = dUMP + diphosphate + H(+). It participates in pyrimidine metabolism; dUMP biosynthesis; dUMP from dCTP (dUTP route): step 2/2. Its function is as follows. This enzyme is involved in nucleotide metabolism: it produces dUMP, the immediate precursor of thymidine nucleotides and it decreases the intracellular concentration of dUTP so that uracil cannot be incorporated into DNA. The sequence is that of Deoxyuridine 5'-triphosphate nucleotidohydrolase from Rhodopseudomonas palustris (strain HaA2).